Here is a 112-residue protein sequence, read N- to C-terminus: Nucleoid-associated protein FTW_0607 (112 aa).

Residues 1–27 are disordered; sequence MNFDMSKLMQQAQKMQEQMKKAQQERE. Residues 17–27 show a composition bias toward basic and acidic residues; sequence EQMKKAQQERE.

This sequence belongs to the YbaB/EbfC family. Homodimer.

The protein resides in the cytoplasm. The protein localises to the nucleoid. Functionally, binds to DNA and alters its conformation. May be involved in regulation of gene expression, nucleoid organization and DNA protection. In Francisella tularensis subsp. tularensis (strain WY96-3418), this protein is Nucleoid-associated protein FTW_0607.